The sequence spans 83 residues: Cytochrome c oxidase subunit 12, mitochondrial (83 aa).

The region spanning 24 to 67 (TKHCWQSYVDYHKCVNMKGEDFAPCKVFWKTYNALCPLDWIEKW) is the CHCH domain. The Cx9C motif signature appears at 27–37 (CWQSYVDYHKC). Cystine bridges form between C27/C59 and C37/C48. Positions 48 to 59 (CKVFWKTYNALC) match the Cx10C motif motif. The residue at position 82 (S82) is a Phosphoserine.

This sequence belongs to the cytochrome c oxidase subunit 6B family. In terms of assembly, component of the cytochrome c oxidase (complex IV, CIV), a multisubunit enzyme composed of 12 subunits. The complex is composed of a catalytic core of 3 subunits COX1, COX2 and COX3, encoded in the mitochondrial DNA, and 9 supernumerary subunits COX4, COX5A (or COX5B), COX6, COX7, COX8, COX9, COX12, COX13 and COX26, which are encoded in the nuclear genome. The complex exists as a monomer or a dimer and forms supercomplexes (SCs) in the inner mitochondrial membrane with a dimer of ubiquinol-cytochrome c oxidoreductase (cytochrome b-c1 complex, complex III, CIII), resulting in 2 different assemblies (supercomplexes III(2)IV and III(2)IV(2)).

Its subcellular location is the mitochondrion inner membrane. Its pathway is energy metabolism; oxidative phosphorylation. In terms of biological role, component of the cytochrome c oxidase, the last enzyme in the mitochondrial electron transport chain which drives oxidative phosphorylation. The respiratory chain contains 3 multisubunit complexes succinate dehydrogenase (complex II, CII), ubiquinol-cytochrome c oxidoreductase (cytochrome b-c1 complex, complex III, CIII) and cytochrome c oxidase (complex IV, CIV), that cooperate to transfer electrons derived from NADH and succinate to molecular oxygen, creating an electrochemical gradient over the inner membrane that drives transmembrane transport and the ATP synthase. Cytochrome c oxidase is the component of the respiratory chain that catalyzes the reduction of oxygen to water. Electrons originating from reduced cytochrome c in the intermembrane space (IMS) are transferred via the dinuclear copper A center (CU(A)) of COX2 and heme A of COX1 to the active site in COX1, a binuclear center (BNC) formed by heme A3 and copper B (CU(B)). The BNC reduces molecular oxygen to 2 water molecules unsing 4 electrons from cytochrome c in the IMS and 4 protons from the mitochondrial matrix. The chain is Cytochrome c oxidase subunit 12, mitochondrial (COX12) from Saccharomyces cerevisiae (strain ATCC 204508 / S288c) (Baker's yeast).